The sequence spans 100 residues: Urease subunit gamma (100 aa).

It belongs to the urease gamma subunit family. In terms of assembly, heterotrimer of UreA (gamma), UreB (beta) and UreC (alpha) subunits. Three heterotrimers associate to form the active enzyme.

It is found in the cytoplasm. It catalyses the reaction urea + 2 H2O + H(+) = hydrogencarbonate + 2 NH4(+). Its pathway is nitrogen metabolism; urea degradation; CO(2) and NH(3) from urea (urease route): step 1/1. This chain is Urease subunit gamma, found in Burkholderia orbicola (strain MC0-3).